Reading from the N-terminus, the 211-residue chain is Claudin-7 (211 aa).

Residues 1-7 are Cytoplasmic-facing; that stretch reads MANSGLQ. The helical transmembrane segment at 8-28 threads the bilayer; it reads LLGFSMALLGWVGLVACTAIP. Residues 29–81 lie on the Extracellular side of the membrane; that stretch reads QWQMSSYAGDNIITAQAMYKGLWMDCVTQSTGMMSCKMYDSVLALSAALQATR. A helical transmembrane segment spans residues 82–102; the sequence is ALMVVSLVLGFLAMFVATMGM. Residues 103 to 117 are Cytoplasmic-facing; sequence KCTRCGGDDKVKKAR. A helical transmembrane segment spans residues 118 to 138; the sequence is IAMGGGIIFIVAGLAALVACS. Residues 139–160 are Extracellular-facing; the sequence is WYGHQIVTDFYNPLIPTNIKYE. Residues 161–181 traverse the membrane as a helical segment; it reads FGPAIFIGWAGSALVILGGAL. Residues 182-211 lie on the Cytoplasmic side of the membrane; it reads LSCSCPGNESKAGYRVPRSYPKSNSSKEYV. The segment at 210 to 211 is interactions with TJP1, TJP2 and TJP3; that stretch reads YV.

This sequence belongs to the claudin family. As to quaternary structure, directly interacts with TJP1/ZO-1, TJP2/ZO-2 and TJP3/ZO-3. The phosphorylated form interacts with EPCAM. Does not interact with CD81. In terms of processing, phosphorylated. As to expression, expressed in kidney, lung and prostate. Isoform 1 seems to be predominant, except in some normal prostate samples, where isoform 2 is the major form. Down-regulated in breast cancers, including ductal carcinoma in situ (DCIS), lobular carcinoma in situ (LCIS) and invasive ductal carcinoma (IDC) (at protein level), as well as in several cancer cell lines. Loss of expression correlates with histological grade, occurring predominantly in high-grade lesions.

It is found in the cell membrane. It localises to the basolateral cell membrane. The protein localises to the cell junction. The protein resides in the tight junction. Functionally, plays a major role in tight junction-specific obliteration of the intercellular space. This Homo sapiens (Human) protein is Claudin-7 (CLDN7).